Reading from the N-terminus, the 180-residue chain is Large ribosomal subunit protein uL16 (180 aa).

The protein belongs to the universal ribosomal protein uL16 family.

This is Large ribosomal subunit protein uL16 from Thermococcus sibiricus (strain DSM 12597 / MM 739).